The sequence spans 641 residues: Tetracycline resistance protein TetQ (641 aa).

The region spanning 1-244 (MNIINLGILA…AITSFILPPA (244 aa)) is the tr-type G domain. GTP contacts are provided by residues 10-17 (AHIDAGKT), 74-78 (DTPGH), and 128-131 (NKID).

Belongs to the TRAFAC class translation factor GTPase superfamily. Classic translation factor GTPase family. TetM/TetO subfamily.

Abolishes the inhibitory effect of tetracyclin on protein synthesis by a non-covalent modification of the ribosomes. This Bacteroides thetaiotaomicron protein is Tetracycline resistance protein TetQ (tetQ).